Here is a 323-residue protein sequence, read N- to C-terminus: Transcription initiation factor IIB 7 (323 aa).

Residues 1-16 (MTRSTRQRERETAAKQ) show a composition bias toward basic and acidic residues. Residues 1–35 (MTRSTRQRERETAAKQEEEEDSEEGVRECPECGSD) are disordered. The TFIIB-type zinc finger occupies 24–56 (EGVRECPECGSDNLVKSSDRAELVCNDCGLVVE). Zn(2+) contacts are provided by cysteine 29, cysteine 32, cysteine 48, and cysteine 51. A run of 2 repeats spans residues 142-225 (SEID…SQEL) and 236-317 (KYVP…EQIE).

This sequence belongs to the TFIIB family.

Functionally, stabilizes TBP binding to an archaeal box-A promoter. Also responsible for recruiting RNA polymerase II to the pre-initiation complex (DNA-TBP-TFIIB). The sequence is that of Transcription initiation factor IIB 7 from Halobacterium salinarum (strain ATCC 700922 / JCM 11081 / NRC-1) (Halobacterium halobium).